Reading from the N-terminus, the 152-residue chain is SsrA-binding protein (152 aa).

It belongs to the SmpB family.

Its subcellular location is the cytoplasm. In terms of biological role, required for rescue of stalled ribosomes mediated by trans-translation. Binds to transfer-messenger RNA (tmRNA), required for stable association of tmRNA with ribosomes. tmRNA and SmpB together mimic tRNA shape, replacing the anticodon stem-loop with SmpB. tmRNA is encoded by the ssrA gene; the 2 termini fold to resemble tRNA(Ala) and it encodes a 'tag peptide', a short internal open reading frame. During trans-translation Ala-aminoacylated tmRNA acts like a tRNA, entering the A-site of stalled ribosomes, displacing the stalled mRNA. The ribosome then switches to translate the ORF on the tmRNA; the nascent peptide is terminated with the 'tag peptide' encoded by the tmRNA and targeted for degradation. The ribosome is freed to recommence translation, which seems to be the essential function of trans-translation. This is SsrA-binding protein from Rickettsia peacockii (strain Rustic).